The primary structure comprises 114 residues: Aspartate 1-decarboxylase (114 aa).

S25 (schiff-base intermediate with substrate; via pyruvic acid) is an active-site residue. The residue at position 25 (S25) is a Pyruvic acid (Ser). T57 is a binding site for substrate. The Proton donor role is filled by Y58. A substrate-binding site is contributed by 71-73 (GAA).

The protein belongs to the PanD family. In terms of assembly, heterooctamer of four alpha and four beta subunits. Pyruvate serves as cofactor. In terms of processing, is synthesized initially as an inactive proenzyme, which is activated by self-cleavage at a specific serine bond to produce a beta-subunit with a hydroxyl group at its C-terminus and an alpha-subunit with a pyruvoyl group at its N-terminus.

Its subcellular location is the cytoplasm. The catalysed reaction is L-aspartate + H(+) = beta-alanine + CO2. The protein operates within cofactor biosynthesis; (R)-pantothenate biosynthesis; beta-alanine from L-aspartate: step 1/1. Functionally, catalyzes the pyruvoyl-dependent decarboxylation of aspartate to produce beta-alanine. The polypeptide is Aspartate 1-decarboxylase (Haloquadratum walsbyi (strain DSM 16790 / HBSQ001)).